Here is a 171-residue protein sequence, read N- to C-terminus: uncharacterized protein (171 aa).

This is an uncharacterized protein from Mycobacterium tuberculosis (strain ATCC 25618 / H37Rv).